The sequence spans 92 residues: Phospholemman (92 aa).

The N-terminal stretch at 1–20 (MASLGHILVFCVGLLTMAKA) is a signal peptide. Topologically, residues 21 to 35 (ESPKEHDPFTYDYQS) are extracellular. Residues 36–56 (LQIGGLVIAGILFILGILIVL) form a helical membrane-spanning segment. Residues 57 to 92 (SRRCRCKFNQQQRTGEPDEEEGTFRSSIRRLSTRRR) lie on the Cytoplasmic side of the membrane. A lipid anchor (S-palmitoyl cysteine) is attached at Cys-60. Cys-62 is subject to S-glutathionyl cysteine; alternate. Cys-62 is lipidated: S-palmitoyl cysteine; alternate. The interval 65-92 (NQQQRTGEPDEEEGTFRSSIRRLSTRRR) is disordered. Position 79 is a phosphothreonine (Thr-79). At Ser-82 the chain carries Phosphoserine. The residue at position 83 (Ser-83) is a Phosphoserine; by PKA and PKC. Residues 83-92 (SIRRLSTRRR) show a composition bias toward basic residues. Ser-88 carries the post-translational modification Phosphoserine; by PKA. Thr-89 carries the phosphothreonine; by PKC modification.

Belongs to the FXYD family. As to quaternary structure, homotetramer. Monomer. Regulatory subunit of the sodium/potassium-transporting ATPase (NKA) which is composed of a catalytic alpha subunit, an auxiliary non-catalytic beta subunit and an additional regulatory subunit. The monomeric form associates with NKA while the oligomeric form does not. Interacts with the catalytic alpha-1 subunit ATP1A1. Also interacts with the catalytic alpha-2 and alpha-3 subunits ATP1A2 and ATP1A3. Very little interaction with ATP1A1, ATP1A2 or ATP1A3 when phosphorylated at Ser-83. Interacts with the non-catalytic beta-1 subunit ATP1B1. Oxidative stress decreases interaction with ATP1A1 but increases interaction with ATP1B1. Post-translationally, major plasma membrane substrate for cAMP-dependent protein kinase (PKA) and protein kinase C (PKC) in several different tissues. Phosphorylated in response to insulin and adrenergic stimulation. Phosphorylation at Ser-88 stimulates sodium/potassium-transporting ATPase activity while the unphosphorylated form inhibits sodium/potassium-transporting ATPase activity. Phosphorylation increases tetramerization, decreases binding to ATP1A1 and reduces inhibition of ATP1A1 activity. Phosphorylation at Ser-83 leads to greatly reduced interaction with ATP1A1, ATP1A2 and ATP1A3. May be phosphorylated by DMPK. In terms of processing, palmitoylation increases half-life and stability and is enhanced upon phosphorylation at Ser-88 by PKA. As to expression, highest expression in skeletal muscle and heart. Moderate levels in brain, placenta, lung, liver, pancreas, uterus, bladder, prostate, small intestine and colon with mucosal lining. Very low levels in kidney, colon and small intestine without mucosa, prostate without endothelial lining, spleen, and testis.

The protein resides in the cell membrane. It is found in the sarcolemma. It localises to the apical cell membrane. Its subcellular location is the membrane. The protein localises to the caveola. The protein resides in the T-tubule. In terms of biological role, associates with and regulates the activity of the sodium/potassium-transporting ATPase (NKA) which transports Na(+) out of the cell and K(+) into the cell. Inhibits NKA activity in its unphosphorylated state and stimulates activity when phosphorylated. Reduces glutathionylation of the NKA beta-1 subunit ATP1B1, thus reversing glutathionylation-mediated inhibition of ATP1B1. Contributes to female sexual development by maintaining the excitability of neurons which secrete gonadotropin-releasing hormone. The sequence is that of Phospholemman from Homo sapiens (Human).